The sequence spans 131 residues: MAKANTASRVRKKVRKTVSEGIVHVHASFNNTIITITDRQGNALSWATSGGAGFKGSRKSTPFAAQVAAEAAGKVAQEYGVKNLEVRIKGPGPGRESSVRALNALGFKITSITDVTPLPHNGCRPPKKRRI.

This sequence belongs to the universal ribosomal protein uS11 family. In terms of assembly, part of the 30S ribosomal subunit. Interacts with proteins S7 and S18. Binds to IF-3.

Located on the platform of the 30S subunit, it bridges several disparate RNA helices of the 16S rRNA. Forms part of the Shine-Dalgarno cleft in the 70S ribosome. The chain is Small ribosomal subunit protein uS11 from Neisseria gonorrhoeae (strain ATCC 700825 / FA 1090).